A 554-amino-acid chain; its full sequence is Potassium-transporting ATPase potassium-binding subunit (554 aa).

The next 12 membrane-spanning stretches (helical) occupy residues 1–21 (MSSQ…LALA), 59–79 (WPAY…FLYL), 131–151 (GLAV…VALV), 174–194 (VRIL…AGAI), 246–266 (PNPL…FALT), 279–299 (GYAI…LMMW), 323–343 (FGIA…TGAV), 352–372 (GFGG…PGGV), 375–395 (GLYG…LMVG), 412–432 (FAAC…AVAM), 481–501 (IGIA…ALAG), and 525–545 (GLLV…ALAL).

This sequence belongs to the KdpA family. As to quaternary structure, the system is composed of three essential subunits: KdpA, KdpB and KdpC.

It is found in the cell membrane. In terms of biological role, part of the high-affinity ATP-driven potassium transport (or Kdp) system, which catalyzes the hydrolysis of ATP coupled with the electrogenic transport of potassium into the cytoplasm. This subunit binds the extracellular potassium ions and delivers the ions to the membrane domain of KdpB through an intramembrane tunnel. The polypeptide is Potassium-transporting ATPase potassium-binding subunit (Streptomyces griseus subsp. griseus (strain JCM 4626 / CBS 651.72 / NBRC 13350 / KCC S-0626 / ISP 5235)).